The following is a 145-amino-acid chain: uncharacterized protein (145 aa).

A helical membrane pass occupies residues 97 to 117 (ISMLLLIVIIAIGLTISYMVI).

It localises to the membrane. This is an uncharacterized protein from Methanocaldococcus jannaschii (strain ATCC 43067 / DSM 2661 / JAL-1 / JCM 10045 / NBRC 100440) (Methanococcus jannaschii).